The primary structure comprises 531 residues: NADH-quinone oxidoreductase subunit N (531 aa).

Transmembrane regions (helical) follow at residues 13-33 (LAPI…EAFA), 45-65 (LALL…AEVI), 85-105 (PALA…LVIA), 150-170 (LFSV…TLFI), 200-220 (YFLL…LLYG), 242-262 (GLLV…VGAV), 289-309 (VAAF…MTWD), 310-330 (IQPF…VLAI), 339-359 (LAYS…AMSP), 365-385 (VFFY…LVAL), 415-435 (VATV…TSGF), 460-480 (ASAA…FTSP), and 496-516 (GFTA…GVWP).

This sequence belongs to the complex I subunit 2 family. As to quaternary structure, NDH-1 is composed of 14 different subunits. Subunits NuoA, H, J, K, L, M, N constitute the membrane sector of the complex.

Its subcellular location is the cell membrane. The enzyme catalyses a quinone + NADH + 5 H(+)(in) = a quinol + NAD(+) + 4 H(+)(out). Its function is as follows. NDH-1 shuttles electrons from NADH, via FMN and iron-sulfur (Fe-S) centers, to quinones in the respiratory chain. The immediate electron acceptor for the enzyme in this species is believed to be a menaquinone. Couples the redox reaction to proton translocation (for every two electrons transferred, four hydrogen ions are translocated across the cytoplasmic membrane), and thus conserves the redox energy in a proton gradient. The polypeptide is NADH-quinone oxidoreductase subunit N (Beutenbergia cavernae (strain ATCC BAA-8 / DSM 12333 / CCUG 43141 / JCM 11478 / NBRC 16432 / NCIMB 13614 / HKI 0122)).